The primary structure comprises 62 residues: Large ribosomal subunit protein bL32 (62 aa).

Residues Ser28–Glu62 form a disordered region.

It belongs to the bacterial ribosomal protein bL32 family.

This chain is Large ribosomal subunit protein bL32, found in Thioalkalivibrio sulfidiphilus (strain HL-EbGR7).